Reading from the N-terminus, the 96-residue chain is Co-chaperonin GroES (96 aa).

This sequence belongs to the GroES chaperonin family. As to quaternary structure, heptamer of 7 subunits arranged in a ring. Interacts with the chaperonin GroEL.

It localises to the cytoplasm. Together with the chaperonin GroEL, plays an essential role in assisting protein folding. The GroEL-GroES system forms a nano-cage that allows encapsulation of the non-native substrate proteins and provides a physical environment optimized to promote and accelerate protein folding. GroES binds to the apical surface of the GroEL ring, thereby capping the opening of the GroEL channel. The chain is Co-chaperonin GroES from Aliivibrio fischeri (strain ATCC 700601 / ES114) (Vibrio fischeri).